A 472-amino-acid chain; its full sequence is Putative cytochrome P450 135B1 (472 aa).

C388 contributes to the heme binding site. The disordered stretch occupies residues 442-472 (RDVSATSQATAQGAGCPAARGGGPSRAVGSQ). Over residues 452–472 (AQGAGCPAARGGGPSRAVGSQ) the composition is skewed to low complexity.

This sequence belongs to the cytochrome P450 family. It depends on heme as a cofactor.

This Mycobacterium bovis (strain ATCC BAA-935 / AF2122/97) protein is Putative cytochrome P450 135B1 (cyp135B1).